Reading from the N-terminus, the 179-residue chain is Large ribosomal subunit protein uL5 (179 aa).

The protein belongs to the universal ribosomal protein uL5 family. As to quaternary structure, part of the 50S ribosomal subunit; part of the 5S rRNA/L5/L18/L25 subcomplex. Contacts the 5S rRNA and the P site tRNA. Forms a bridge to the 30S subunit in the 70S ribosome.

This is one of the proteins that bind and probably mediate the attachment of the 5S RNA into the large ribosomal subunit, where it forms part of the central protuberance. In the 70S ribosome it contacts protein S13 of the 30S subunit (bridge B1b), connecting the 2 subunits; this bridge is implicated in subunit movement. Contacts the P site tRNA; the 5S rRNA and some of its associated proteins might help stabilize positioning of ribosome-bound tRNAs. This is Large ribosomal subunit protein uL5 from Xylella fastidiosa (strain M12).